The primary structure comprises 522 residues: MELFSSQQWLALLPPIILCILLFSYVYIILWLRPERLRQKLRSQGVRGPKPSFLFGNIPEMRRIQQLAKSAHEQEAGSTDMFSSNYVATLFPYFLHWSRVYGSIYLYSTGSIQVLNVTDPNMVKELANCKSLDLGKPCYLQKERGALLGMGILTSNGDLWVHQRKVIAPELFMERVKGMVNLMMEAAMSMLNSWKNEVEDRGGSAEIVVDEFLRTFSADVISRACFGSSFSEGKEIFIKIRQLQKAMAKQSMLIGVPGSRYLPTRSNRGIWNLDSSIRTLILNISKKYEHDSSTSVNKDLLHSIIQGSKDGPFASCTPEDFIVDNCKNIYFAGHETTSTTAAWCLMLLASHHEWQSRARVESLDICQGRPLDFDILRKLKKLTMVIQETLRLYPPASFVAREALNDMKLGGIDIPKGTNIWIPIAMAHRDPSVWGPSADKFDPDRFANGIAGACKPPHMYMPFGVGVRTCAGQNLAMVELKVVLSLLLSKFEFKLSPNYVHCPAFRLTIEPGKGVPLIFREL.

At 1–11 the chain is on the lumenal side; it reads MELFSSQQWLA. Residues 12–32 traverse the membrane as a helical; Signal-anchor for type III membrane protein segment; the sequence is LLPPIILCILLFSYVYIILWL. At 33 to 522 the chain is on the cytoplasmic side; sequence RPERLRQKLR…KGVPLIFREL (490 aa). Cys470 lines the heme pocket.

The protein belongs to the cytochrome P450 family. It depends on heme as a cofactor.

It is found in the membrane. In terms of biological role, probably not involved in gibberellin metabolism since over-expression of CYP714C2 in a heterologous system does not induce semi-dwarfism. The sequence is that of Cytochrome P450 714C2 (CYP714C2) from Oryza sativa subsp. japonica (Rice).